We begin with the raw amino-acid sequence, 88 residues long: Small ribosomal subunit protein uS15c (88 aa).

Belongs to the universal ribosomal protein uS15 family. As to quaternary structure, part of the 30S ribosomal subunit.

Its subcellular location is the plastid. It is found in the chloroplast. The protein is Small ribosomal subunit protein uS15c (rps15) of Arabis hirsuta (Hairy rock-cress).